The following is a 229-amino-acid chain: Rhamnosyl O-methyltransferase (229 aa).

The N-terminal stretch at 1 to 23 is a signal peptide; it reads MERVRQMFSCVSGMIYRPTDSIA.

The protein belongs to the rhamnosyl O-methyltransferase family.

Functionally, catalyzes the O-methylation of the hydroxyl group located on C-2 of the first rhamnosyl residue linked to the phenolic group of glycosylated phenolphthiocerol dimycocerosates (PGL) and p-hydroxybenzoic acid derivatives (p-HBAD). This chain is Rhamnosyl O-methyltransferase, found in Mycobacterium leprae (strain TN).